A 130-amino-acid polypeptide reads, in one-letter code: Large ribosomal subunit protein bL17 (130 aa).

Belongs to the bacterial ribosomal protein bL17 family. As to quaternary structure, part of the 50S ribosomal subunit. Contacts protein L32.

The sequence is that of Large ribosomal subunit protein bL17 from Photorhabdus laumondii subsp. laumondii (strain DSM 15139 / CIP 105565 / TT01) (Photorhabdus luminescens subsp. laumondii).